The following is a 203-amino-acid chain: Cardiotrophin-1 (203 aa).

Belongs to the IL-6 superfamily. In terms of tissue distribution, expressed in the ventricle and atrium of adult rats. Also detected in the lung, kidney, liver, skeletal muscle, stomach and urinary bladder. Not detected in brain, colon, testis, spleen or thymus. Overexpressed in the ventricles in the case of hypertension and hypertrophy.

The protein resides in the secreted. Induces cardiac myocyte hypertrophy in vitro. Binds to and activates the ILST/gp130 receptor. In Rattus norvegicus (Rat), this protein is Cardiotrophin-1 (Ctf1).